The following is a 337-amino-acid chain: Fructose-1,6-bisphosphatase class 1 (337 aa).

Mg(2+)-binding residues include E89, D112, L114, and D115. Residues 115-118, N208, Y241, and K271 contribute to the substrate site; that span reads DGSS. Residue E277 coordinates Mg(2+).

The protein belongs to the FBPase class 1 family. In terms of assembly, homotetramer. Mg(2+) is required as a cofactor.

The protein localises to the cytoplasm. The enzyme catalyses beta-D-fructose 1,6-bisphosphate + H2O = beta-D-fructose 6-phosphate + phosphate. It functions in the pathway carbohydrate biosynthesis; gluconeogenesis. This Yersinia enterocolitica serotype O:8 / biotype 1B (strain NCTC 13174 / 8081) protein is Fructose-1,6-bisphosphatase class 1.